Here is a 304-residue protein sequence, read N- to C-terminus: Porphobilinogen deaminase (304 aa).

Residue Cys240 is modified to S-(dipyrrolylmethanemethyl)cysteine.

This sequence belongs to the HMBS family. As to quaternary structure, monomer. It depends on dipyrromethane as a cofactor.

It carries out the reaction 4 porphobilinogen + H2O = hydroxymethylbilane + 4 NH4(+). It participates in porphyrin-containing compound metabolism; protoporphyrin-IX biosynthesis; coproporphyrinogen-III from 5-aminolevulinate: step 2/4. Tetrapolymerization of the monopyrrole PBG into the hydroxymethylbilane pre-uroporphyrinogen in several discrete steps. In Xanthomonas euvesicatoria pv. vesicatoria (strain 85-10) (Xanthomonas campestris pv. vesicatoria), this protein is Porphobilinogen deaminase.